The primary structure comprises 101 residues: MAKSSMKAREAKRAKLVAKFAEKRLALKAIISSPTTSDEDRWDAVLKLQALPRDSSSARQRNRCSQTGRPHGFLRKFGLSRIKLREATMRGEVPGLRKASW.

This sequence belongs to the universal ribosomal protein uS14 family. As to quaternary structure, part of the 30S ribosomal subunit. Contacts proteins S3 and S10.

Its function is as follows. Binds 16S rRNA, required for the assembly of 30S particles and may also be responsible for determining the conformation of the 16S rRNA at the A site. In Shewanella piezotolerans (strain WP3 / JCM 13877), this protein is Small ribosomal subunit protein uS14.